Reading from the N-terminus, the 249-residue chain is 3-deoxy-D-manno-octulosonic acid kinase (249 aa).

Aspartate 175 is a catalytic residue.

It belongs to the protein kinase superfamily. KdkA/RfaP family.

The protein localises to the cell inner membrane. It catalyses the reaction an alpha-Kdo-(2-&gt;6)-lipid IVA + ATP = a 4-O-phospho-alpha-Kdo-(2-&gt;6)-lipid IVA + ADP + H(+). Its pathway is bacterial outer membrane biogenesis; LPS core biosynthesis. Catalyzes the ATP-dependent phosphorylation of the 3-deoxy-D-manno-octulosonic acid (Kdo) residue in Kdo-lipid IV(A) at the 4-OH position. This is 3-deoxy-D-manno-octulosonic acid kinase from Xanthomonas axonopodis pv. citri (strain 306).